The chain runs to 425 residues: 5-nitroanthranilic acid aminohydrolase (425 aa).

The active site involves Asp88. The active-site Proton acceptor is the Glu158.

It belongs to the peptidase M20A family. Co(2+) is required as a cofactor. Requires Mn(2+) as cofactor. The cofactor is Zn(2+). It depends on Fe(2+) as a cofactor. Ni(2+) serves as cofactor.

The catalysed reaction is 5-nitroanthranilate + H2O + H(+) = 5-nitrosalicylate + NH4(+). In terms of biological role, catalyzes the deamination of 5-nitroanthranilate (5NAA) to 5-nitrosalicylate (5NSA), the first step in biodegradation of 5-nitroanthranilate. The sequence is that of 5-nitroanthranilic acid aminohydrolase (naaA) from Bradyrhizobium sp.